The primary structure comprises 327 residues: F-box/LRR-repeat protein At3g58900 (327 aa).

The F-box domain occupies 1 to 47 (MDLFSSLPNELLYHILSFLSTKEAALTSVLSKRWRNLFAFVPYLEFD). LRR repeat units follow at residues 116-144 (DLFIDFRDLYSLPHEVGVSRTLVVLRVGS), 161-192 (KTLVLDSCWLCIGQFQILLLACPALEELDMTN), 199-230 (NVTVSSSILKELTIDLHGCCSVVNLKSLSFDA), 235-261 (YFYYCDSLAEDYPQVNLKNLVEAQINL), and 277-308 (EMLVADDVFPGLGNAWKLITGLRNVQQLYLSP).

The sequence is that of F-box/LRR-repeat protein At3g58900 from Arabidopsis thaliana (Mouse-ear cress).